The primary structure comprises 185 residues: Neuronal vesicle trafficking-associated protein 1 (185 aa).

At 1–82 the chain is on the cytoplasmic side; that stretch reads MVKLGNNFAE…ITEGVTERFK (82 aa). Residues 83–103 form a helical; Signal-anchor for type II membrane protein membrane-spanning segment; the sequence is VSVLVLFALAFLTCVVFLVVY. At 104–185 the chain is on the lumenal side; it reads KVYKYDRACP…QETEAAEKSA (82 aa). Residues 129 to 164 are required for GRIP1 interaction; sequence ESYYTEQDSSAREKFYTVINHYNLAKQSITRSVSPW.

Belongs to the NSG family. In terms of assembly, forms a complex with GRIP1, GRIA2 and STX12; controls the intracellular fate of AMPAR and the endosomal sorting of the GRIA2 subunit toward recycling and membrane targeting. Interacts with GRIP1. Interacts with STX12. Interacts with APP; could regulate APP processing. Interacts with FAM171A1. As to expression, widely expressed in brain and spinal cord. Expressed in neurons during maturation and synapse formation.

It localises to the membrane. It is found in the golgi apparatus. The protein localises to the trans-Golgi network membrane. The protein resides in the endosome membrane. Its subcellular location is the cell projection. It localises to the dendrite. It is found in the early endosome membrane. The protein localises to the late endosome membrane. The protein resides in the lysosome lumen. Its subcellular location is the recycling endosome membrane. It localises to the cytoplasmic vesicle membrane. It is found in the golgi stack membrane. The protein localises to the endosome. The protein resides in the multivesicular body membrane. Its subcellular location is the endoplasmic reticulum membrane. In terms of biological role, plays a role in the recycling mechanism in neurons of multiple receptors, including AMPAR, APP and L1CAM and acts at the level of early endosomes to promote sorting of receptors toward a recycling pathway. Regulates sorting and recycling of GRIA2 through interaction with GRIP1 and then contributes to the regulation of synaptic transmission and plasticity by affecting the recycling and targeting of AMPA receptors to the synapse. Is required for faithful sorting of L1CAM to axons by facilitating trafficking from somatodendritic early endosome or the recycling endosome. In an other hand, induces apoptosis via the activation of CASP3 in response to DNA damage. This is Neuronal vesicle trafficking-associated protein 1 from Rattus norvegicus (Rat).